Reading from the N-terminus, the 518-residue chain is Macrophage receptor MARCO (518 aa).

The Cytoplasmic segment spans residues 1-48; it reads MGSKELLKEEDFLGSTEDRADFDQAMFPVMETFEINDPVPKKRNGGTF. A helical; Signal-anchor for type II membrane protein transmembrane segment spans residues 49-69; that stretch reads CMAVMAIHLILLTAGTALLLI. Over 70 to 518 the chain is Extracellular; that stretch reads QVLNLQEQLQ…HNEDAGVECS (449 aa). Residues N87 and N138 are each glycosylated (N-linked (GlcNAc...) asparagine). The interval 147-426 is disordered; the sequence is QIKGERGSPG…GESFQRVRIM (280 aa). In terms of domain architecture, Collagen-like spans 149-418; that stretch reads KGERGSPGPK…QKGEKGQKGE (270 aa). The segment covering 154–163 has biased composition (low complexity); the sequence is SPGPKGAPGA. Over residues 239 to 250 the composition is skewed to basic and acidic residues; that stretch reads KGEHGTKGDKGD. 2 stretches are compositionally biased toward low complexity: residues 293-314 and 325-344; these read PGVK…QGAP and RTGL…PGIA. Residues 410-421 show a composition bias toward basic and acidic residues; the sequence is KGEKGQKGESFQ. The SRCR domain occupies 423–518; it reads VRIMGGTNRG…HNEDAGVECS (96 aa). 3 cysteine pairs are disulfide-bonded: C446/C507, C459/C517, and C487/C497.

As to quaternary structure, homotrimer; disulfide-linked. Trimers may assemble in larger oligomers thus resulting in the creation of a large surface capable of interacting with very large ligands. In terms of processing, N-glycosylated. Expressed in subpopulations of macrophages in the spleen and the medullary cord of lymph nodes (at protein level).

The protein localises to the cell membrane. Functionally, pattern recognition receptor (PRR) which binds Gram-positive and Gram-negative bacteria. Also plays a role in binding of unopsonized particles by alveolar macrophages. Binds to the secretoglobin SCGB3A2. The sequence is that of Macrophage receptor MARCO (Marco) from Mus musculus (Mouse).